Consider the following 93-residue polypeptide: Pyrimidine/purine nucleoside phosphorylase (93 aa).

It belongs to the nucleoside phosphorylase PpnP family.

The catalysed reaction is a purine D-ribonucleoside + phosphate = a purine nucleobase + alpha-D-ribose 1-phosphate. The enzyme catalyses adenosine + phosphate = alpha-D-ribose 1-phosphate + adenine. It carries out the reaction cytidine + phosphate = cytosine + alpha-D-ribose 1-phosphate. It catalyses the reaction guanosine + phosphate = alpha-D-ribose 1-phosphate + guanine. The catalysed reaction is inosine + phosphate = alpha-D-ribose 1-phosphate + hypoxanthine. The enzyme catalyses thymidine + phosphate = 2-deoxy-alpha-D-ribose 1-phosphate + thymine. It carries out the reaction uridine + phosphate = alpha-D-ribose 1-phosphate + uracil. It catalyses the reaction xanthosine + phosphate = alpha-D-ribose 1-phosphate + xanthine. Functionally, catalyzes the phosphorolysis of diverse nucleosides, yielding D-ribose 1-phosphate and the respective free bases. Can use uridine, adenosine, guanosine, cytidine, thymidine, inosine and xanthosine as substrates. Also catalyzes the reverse reactions. This chain is Pyrimidine/purine nucleoside phosphorylase, found in Tolumonas auensis (strain DSM 9187 / NBRC 110442 / TA 4).